Reading from the N-terminus, the 309-residue chain is UDP-N-acetylenolpyruvoylglucosamine reductase (309 aa).

The FAD-binding PCMH-type domain maps to 34–221 (RVGGPAQVLF…TAAREAAQPI (188 aa)). R179 is an active-site residue. Catalysis depends on S228, which acts as the Proton donor. Residue E298 is part of the active site.

The protein belongs to the MurB family. Requires FAD as cofactor.

Its subcellular location is the cytoplasm. It catalyses the reaction UDP-N-acetyl-alpha-D-muramate + NADP(+) = UDP-N-acetyl-3-O-(1-carboxyvinyl)-alpha-D-glucosamine + NADPH + H(+). Its pathway is cell wall biogenesis; peptidoglycan biosynthesis. Functionally, cell wall formation. The chain is UDP-N-acetylenolpyruvoylglucosamine reductase from Methylorubrum populi (strain ATCC BAA-705 / NCIMB 13946 / BJ001) (Methylobacterium populi).